A 381-amino-acid polypeptide reads, in one-letter code: Cytochrome b (381 aa).

4 helical membrane-spanning segments follow: residues 33-53 (FGSL…FLAM), 77-98 (WLLR…FLHV), 113-133 (WNIG…GYVL), and 178-198 (FFAF…VHLL). Residues His83 and His97 each coordinate heme b. Residues His182 and His196 each coordinate heme b. Residue His201 coordinates a ubiquinone. Transmembrane regions (helical) follow at residues 226 to 246 (IKDA…GLFS), 288 to 308 (LGGV…PLLH), 320 to 340 (IFQT…WIGG), and 347 to 367 (FIII…ALMP).

The protein belongs to the cytochrome b family. In terms of assembly, the cytochrome bc1 complex contains 11 subunits: 3 respiratory subunits (MT-CYB, CYC1 and UQCRFS1), 2 core proteins (UQCRC1 and UQCRC2) and 6 low-molecular weight proteins (UQCRH/QCR6, UQCRB/QCR7, UQCRQ/QCR8, UQCR10/QCR9, UQCR11/QCR10 and a cleavage product of UQCRFS1). This cytochrome bc1 complex then forms a dimer. It depends on heme b as a cofactor.

It localises to the mitochondrion inner membrane. In terms of biological role, component of the ubiquinol-cytochrome c reductase complex (complex III or cytochrome b-c1 complex) that is part of the mitochondrial respiratory chain. The b-c1 complex mediates electron transfer from ubiquinol to cytochrome c. Contributes to the generation of a proton gradient across the mitochondrial membrane that is then used for ATP synthesis. The polypeptide is Cytochrome b (MT-CYB) (Dasykaluta rosamondae (Little red marsupial mouse)).